A 493-amino-acid chain; its full sequence is Adenylyltransferase and sulfurtransferase uba4 (493 aa).

Residues Gly99, Asp120, 127-131 (SNLHR), Lys144, and 188-189 (DN) each bind ATP. Zn(2+)-binding residues include Cys237 and Cys240. Cys254 (glycyl thioester intermediate; for adenylyltransferase activity) is an active-site residue. Positions 316 and 319 each coordinate Zn(2+). The Rhodanese domain maps to 376-491 (INKEPTIIDV…WREQIDPDWP (116 aa)). The Cysteine persulfide intermediate; for sulfurtransferase activity role is filled by Cys446.

This sequence in the N-terminal section; belongs to the HesA/MoeB/ThiF family. UBA4 subfamily. The cofactor is Zn(2+).

The protein localises to the cytoplasm. It localises to the cytosol. It catalyses the reaction [molybdopterin-synthase sulfur-carrier protein]-C-terminal Gly-Gly + ATP + H(+) = [molybdopterin-synthase sulfur-carrier protein]-C-terminal Gly-Gly-AMP + diphosphate. It carries out the reaction [molybdopterin-synthase sulfur-carrier protein]-C-terminal Gly-Gly-AMP + S-sulfanyl-L-cysteinyl-[cysteine desulfurase] + AH2 = [molybdopterin-synthase sulfur-carrier protein]-C-terminal-Gly-aminoethanethioate + L-cysteinyl-[cysteine desulfurase] + A + AMP + 2 H(+). Its pathway is tRNA modification; 5-methoxycarbonylmethyl-2-thiouridine-tRNA biosynthesis. It functions in the pathway cofactor biosynthesis; molybdopterin biosynthesis. Its function is as follows. Plays a central role in 2-thiolation of mcm(5)S(2)U at tRNA wobble positions of cytosolic tRNA(Lys), tRNA(Glu) and tRNA(Gln). Also essential during biosynthesis of the molybdenum cofactor. Acts by mediating the C-terminal thiocarboxylation of sulfur carriers urm1 and mocs2a. Its N-terminus first activates urm1 and mocs2a as acyl-adenylates (-COAMP), then the persulfide sulfur on the catalytic cysteine is transferred to urm1 and mocs2a to form thiocarboxylation (-COSH) of their C-terminus. The reaction probably involves hydrogen sulfide that is generated from the persulfide intermediate and that acts as a nucleophile towards urm1 and mocs2a. Subsequently, a transient disulfide bond is formed. Does not use thiosulfate as sulfur donor; nfs1 probably acting as a sulfur donor for thiocarboxylation reactions. The sequence is that of Adenylyltransferase and sulfurtransferase uba4 from Aspergillus fumigatus (strain ATCC MYA-4609 / CBS 101355 / FGSC A1100 / Af293) (Neosartorya fumigata).